We begin with the raw amino-acid sequence, 1117 residues long: Protein ECM21 (1117 aa).

Disordered stretches follow at residues 1–48 and 63–155; these read MPFI…RRSS and VHSP…YSQI. Over residues 11-34 the composition is skewed to polar residues; sequence KNSSHSLSETDLNQSKGQPFQPSP. Ser18 is modified (phosphoserine). The span at 70–81 shows a compositional bias: low complexity; it reads NNTTKGGNNNGN. Position 115 is a phosphoserine (Ser115). Over residues 117 to 130 the composition is skewed to low complexity; sequence SDSATTTPRSSTSD. Residue Ser140 is modified to Phosphoserine. Lys191 is covalently cross-linked (Glycyl lysine isopeptide (Lys-Gly) (interchain with G-Cter in ubiquitin)). Disordered stretches follow at residues 275-312 and 486-523; these read ATTA…ELNT and YRQD…AQAH. Position 286 is a phosphoserine (Ser286). Over residues 501–519 the composition is skewed to low complexity; sequence SSSSLSSTTSSLKLTETES. 2 positions are modified to phosphoserine: Ser527 and Ser550. Glycyl lysine isopeptide (Lys-Gly) (interchain with G-Cter in ubiquitin) cross-links involve residues Lys577, Lys651, and Lys712. Residue Ser775 is modified to Phosphoserine. Glycyl lysine isopeptide (Lys-Gly) (interchain with G-Cter in ubiquitin) cross-links involve residues Lys794, Lys807, and Lys1024. Disordered regions lie at residues 1016–1065 and 1079–1117; these read RSRF…KDKQ and KDDE…SDEE. Over residues 1027–1059 the composition is skewed to polar residues; it reads STPSPVNRSHNSSPTNGLSQANGTVRIPNATTE. Ser1035 is modified (phosphoserine). Residues 1089 to 1098 show a composition bias toward low complexity; that stretch reads SSSSADSLLS.

It belongs to the CSR2 family.

The protein localises to the cytoplasm. In terms of biological role, may be involved in cell wall organization and biogenesis. This Saccharomyces cerevisiae (strain ATCC 204508 / S288c) (Baker's yeast) protein is Protein ECM21 (ECM21).